The sequence spans 722 residues: Disintegrin and metalloproteinase domain-containing protein 21 (722 aa).

An N-terminal signal peptide occupies residues 1 to 31 (MAVDGTLVYIRVTLLLLWLGVFLSISGYCQA). A propeptide spanning residues 32–196 (GPSQHFTSPE…FEEAENSALE (165 aa)) is cleaved from the precursor. N-linked (GlcNAc...) asparagine glycosylation occurs at N164. The Cysteine switch motif lies at 171 to 178 (MRCGLTEK). Position 173 (C173) interacts with Zn(2+). At 197 to 681 (PKSAGDWWTH…DSGPASAKRG (485 aa)) the chain is on the extracellular side. The Peptidase M12B domain occupies 208–398 (WFLELVVVVN…NQGSCLHNPP (191 aa)). N227 carries an N-linked (GlcNAc...) asparagine glycan. 3 disulfide bridges follow: C316/C393, C356/C378, and C358/C363. Residue H341 participates in Zn(2+) binding. E342 is a catalytic residue. Positions 345 and 351 each coordinate Zn(2+). N-linked (GlcNAc...) asparagine glycans are attached at residues N377, N437, N478, N546, and N600. One can recognise a Disintegrin domain in the interval 406–492 (LKRCGNGVVE…QCPEDRYVQD (87 aa)). C464 and C484 are oxidised to a cystine. 3 cysteine pairs are disulfide-bonded: C634–C645, C639–C651, and C653–C662. The EGF-like domain occupies 634-663 (CLPETCNMKGICNNKHHCHCGYGWSPPYCQ). The helical transmembrane segment at 682 to 702 (VFLPLIVIPSLSVLTFLFTVG) threads the bilayer. Topologically, residues 703-722 (LLMYLRQCSGPKETKAHSSG) are cytoplasmic.

It depends on Zn(2+) as a cofactor. Post-translationally, has no obvious cleavage site for furin endopeptidase, suggesting that the proteolytic processing is regulated.

It localises to the membrane. Its function is as follows. May be involved in sperm maturation and/or fertilization. May also be involved in epithelia functions associated with establishing and maintaining gradients of ions or nutrients. The chain is Disintegrin and metalloproteinase domain-containing protein 21 (ADAM21) from Homo sapiens (Human).